A 1854-amino-acid polypeptide reads, in one-letter code: Protein virilizer (1854 aa).

Ser-186 carries the phosphoserine modification. Composition is skewed to basic and acidic residues over residues 202-214 and 236-259; these read YHQH…QREM and THSE…DWSR. 5 disordered regions span residues 202–361, 777–821, 1570–1589, 1720–1788, and 1804–1854; these read YHQH…EIIG, NPEE…GKPV, TSTE…ASSC, VRGR…NRGS, and IGSP…SYLR. Ser-258, Ser-260, and Ser-276 each carry phosphoserine. Positions 275 to 285 are enriched in basic and acidic residues; that stretch reads RSRSVVDEHKW. Thr-288 carries the phosphothreonine modification. Position 295 is a phosphoserine (Ser-295). Phosphothreonine is present on Thr-297. Phosphoserine is present on residues Ser-301 and Ser-312. Composition is skewed to basic and acidic residues over residues 325 to 343 and 777 to 796; these read HSSE…EDRS and NPEE…KAME. Residues 779–808 adopt a coiled-coil conformation; it reads EEKEEKAEKSDAEDKAMEVENEAVEAGGEK. 2 stretches are compositionally biased toward low complexity: residues 1738-1748 and 1816-1838; these read SRPPNTSRPPS and SYRS…PHYS.

The protein belongs to the vir family. In terms of assembly, component of the WMM complex, a N6-methyltransferase complex composed of a catalytic subcomplex, named MAC, and of an associated subcomplex, named MACOM. The MAC subcomplex is composed of Ime4/Mettl3 and Mettl14. The MACOM subcomplex is composed of fl(2)d, Flacc/Xio, Hakai, vir, and, in some cases of nito. Part of a complex containing fl(2)d, Sxl and vir.

The protein localises to the nucleus. Associated component of the WMM complex, a complex that mediates N6-methyladenosine (m6A) methylation of mRNAs, a modification that plays a role in the efficiency of mRNA splicing and is required for sex determination. Required for sex determination and dosage compensation via Sxl alternative splicing: m6A methylation acts as a key regulator of Sxl pre-mRNA and promotes female-specific alternative splicing of Sxl, which determines female physiognomy. M6A methylation is also required for neuronal functions. Required for proper inclusion of regulated exons in Ubx transcripts, leading to isoforms Ia/b and IIa/b. In Drosophila melanogaster (Fruit fly), this protein is Protein virilizer.